A 422-amino-acid chain; its full sequence is Probable isoprenylcysteine alpha-carbonyl methylesterase ICMEL2 (422 aa).

The segment covering 1–16 has biased composition (basic and acidic residues); that stretch reads MQLSPERCRPMSENRE. Positions 1–55 are disordered; it reads MQLSPERCRPMSENREAWSANSEEMELLHGSNRLSSPEHVRRRVSGNSSEDGSPR. A run of 2 helical transmembrane segments spans residues 97 to 117 and 152 to 172; these read LLAL…VAYL and VVVF…GSLL. Substrate contacts are provided by residues 158-160 and 229-231; these read GGA and QSA. Catalysis depends on residues serine 230, aspartate 331, and histidine 363.

The protein belongs to the AB hydrolase superfamily. Isoprenylcysteine methylesterase family. In terms of tissue distribution, expressed at low levels in flowers and siliques.

Its subcellular location is the endoplasmic reticulum membrane. The protein resides in the golgi apparatus membrane. The enzyme catalyses [protein]-C-terminal S-[(2E,6E)-farnesyl]-L-cysteine methyl ester + H2O = [protein]-C-terminal S-[(2E,6E)-farnesyl]-L-cysteine + methanol + H(+). Its function is as follows. Catalyzes the demethylation of isoprenylcysteine methylesters. May act as a negative regulator of ABA signaling. In Arabidopsis thaliana (Mouse-ear cress), this protein is Probable isoprenylcysteine alpha-carbonyl methylesterase ICMEL2.